The primary structure comprises 570 residues: Auxin efflux carrier component 6 (570 aa).

The Extracellular portion of the chain corresponds to 1-6; the sequence is MITGNE. The helical transmembrane segment at 7 to 27 threads the bilayer; sequence FYTVMCAMAPLYFAMFVAYGS. Residues 28–38 lie on the Cytoplasmic side of the membrane; the sequence is VKWCKIFTPAQ. The helical transmembrane segment at 39–59 threads the bilayer; it reads CSGINRFVSVFAVPVLSFHFI. Residue valine 51 participates in (indol-3-yl)acetate binding. Residues 60 to 70 lie on the Extracellular side of the membrane; the sequence is SQNNPYKMDTM. A helical membrane pass occupies residues 71-91; it reads FILADTLSKIFVFVLLSLWAV. The Cytoplasmic segment spans residues 92-100; sequence FFKAGGLDW. The helical transmembrane segment at 101–121 threads the bilayer; that stretch reads LITLFSIATLPNTLVMGIPLL. Asparagine 112 and leucine 114 together coordinate (indol-3-yl)acetate. At 122–131 the chain is on the extracellular side; it reads QAMYGDYTQT. The chain crosses the membrane as a helical span at residues 132-152; the sequence is LMVQLVVLQCIIWYTLLLFLF. Residue tyrosine 145 participates in (indol-3-yl)acetate binding. The Cytoplasmic portion of the chain corresponds to 153-430; it reads ELRAARLLIR…LSRNPNTYSS (278 aa). Phosphoserine occurs at positions 230 and 308. The helical transmembrane segment at 431 to 451 threads the bilayer; it reads LLGLVWSLISFKWNIPMPNIV. The Extracellular segment spans residues 452–454; the sequence is DFS. A helical membrane pass occupies residues 455 to 475; it reads IKIISDAGLGMAMFSLGLFMA. The Cytoplasmic portion of the chain corresponds to 476 to 491; sequence LQPKMIPCGAKKATMG. A helical membrane pass occupies residues 492–512; sequence MLIRFISGPLFMAGASLLVGL. At 513-515 the chain is on the extracellular side; it reads RGS. The chain crosses the membrane as a helical span at residues 516-536; that stretch reads RLHAAIVQAALPQGIVPFVFA. (indol-3-yl)acetate is bound by residues isoleucine 530 and valine 531. Topologically, residues 537-549 are cytoplasmic; the sequence is REYNLHPDLLSTL. A helical transmembrane segment spans residues 550–570; the sequence is VIFGMIVSLPVTILYYVLLGL.

Belongs to the auxin efflux carrier (TC 2.A.69.1) family. As to quaternary structure, homodimer. As to expression, expressed in the vasculature of the primary root, cotyledons, floral stem, sepals and the main transmitting tract of the reproductive silique. Expressed in embryos, shoot meristem, root tip and lateral root meristems. Expressed in the nectaries and the floral organ boundaries of the anthers. Detected in pollen. Expressed in broad subepidermal domains that narrowed to sites of vein formation. Expressed in veins of mature leaves.

Its subcellular location is the endoplasmic reticulum membrane. In terms of biological role, component of the intracellular auxin-transport pathway. Regulates auxin transport and auxin homeostasis. Directly involved in the regulation of nectar production. Involved in unfolded protein response (UPR) activation. Involved in the control of vein patterning. Redundantly with PIN8, inhibits the vein-formation-promoting functions of PIN5. PIN5, PIN6, and PIN8 control vein network geometry, but they are expressed in mutually exclusive domains of leaf vascular cells. The protein is Auxin efflux carrier component 6 of Arabidopsis thaliana (Mouse-ear cress).